Reading from the N-terminus, the 147-residue chain is Hemoglobin subunit epsilon-Y2 (147 aa).

One can recognise a Globin domain in the interval 3-147 (NFTAEEKTLI…VATALSHKYH (145 aa)). Ser-51 bears the Phosphoserine mark. His-64 and His-93 together coordinate heme b.

The protein belongs to the globin family. High expression in yolk sac blood islands, fetal liver, and embryonic erythrocytes. Very low levels in adult liver and spleen.

Hemoglobin epsilon chain is a beta-type chain found in early embryos. The polypeptide is Hemoglobin subunit epsilon-Y2 (Hbb-y) (Mus musculus (Mouse)).